Reading from the N-terminus, the 518-residue chain is MAKTDTASFDSILVLDFGSQYNQLITRRIRDFGVYSELLPNTITAEEIKARHPKGIIFSGGPNSVYDDGAFRVDPEIFKLGLPILGICYGMQLMTYTLAGGKVESADNREYGKANIDVTSDSATLFKDTPAEQSVWMSHGDLVTQAPDGFDVVATSKNCPIAAIQDVDRKLYGIQFHAEVRNTDYGNDILRHFAFDVCQAEANWSMDDFIDMQIEKIRAEVGDKKVLLGLSGGVDSSVVGVLLHKAIGTQLTSIFVDHGLLRKGEADQVMASLEGKFGLNIIKVDAKDRFLSKLAGVSDPERKRKIIGNEFIQVFDEEATKLNGMEFLAQGTLYTDVIESGTSTAQTIKSHHNVGGLPEDMQFKLIEPLRTLFKDEARELGEKLGMPSDLVWRQPFPGPGLGIRVIGEITEDKLEIVRDSDFILRDEIKKAGLDREIWQYFTVLPGIKSVGVMGDGRTYDYTVGIRAVTSIDGMTADFARIPWDVLQKISVRIVNEVDHVNRIVYDVTSKPPSTIEWE.

The region spanning 11–203 (SILVLDFGSQ…AFDVCQAEAN (193 aa)) is the Glutamine amidotransferase type-1 domain. Cys-88 serves as the catalytic Nucleophile. Residues His-177 and Glu-179 contribute to the active site. A GMPS ATP-PPase domain is found at 204 to 393 (WSMDDFIDMQ…LGMPSDLVWR (190 aa)). 231 to 237 (SGGVDSS) provides a ligand contact to ATP.

In terms of assembly, homodimer.

The catalysed reaction is XMP + L-glutamine + ATP + H2O = GMP + L-glutamate + AMP + diphosphate + 2 H(+). The protein operates within purine metabolism; GMP biosynthesis; GMP from XMP (L-Gln route): step 1/1. Functionally, catalyzes the synthesis of GMP from XMP. The polypeptide is GMP synthase [glutamine-hydrolyzing] (Lactiplantibacillus plantarum (strain ATCC BAA-793 / NCIMB 8826 / WCFS1) (Lactobacillus plantarum)).